Consider the following 688-residue polypeptide: Elongation factor G (688 aa).

The tr-type G domain maps to 8–282 (INFRNFGIMA…AVVDFLPSPV (275 aa)). Residues 17–24 (AHIDAGKT), 81–85 (DTPGH), and 135–138 (NKMD) each bind GTP.

The protein belongs to the TRAFAC class translation factor GTPase superfamily. Classic translation factor GTPase family. EF-G/EF-2 subfamily.

It is found in the cytoplasm. Functionally, catalyzes the GTP-dependent ribosomal translocation step during translation elongation. During this step, the ribosome changes from the pre-translocational (PRE) to the post-translocational (POST) state as the newly formed A-site-bound peptidyl-tRNA and P-site-bound deacylated tRNA move to the P and E sites, respectively. Catalyzes the coordinated movement of the two tRNA molecules, the mRNA and conformational changes in the ribosome. In Mycoplasma pneumoniae (strain ATCC 29342 / M129 / Subtype 1) (Mycoplasmoides pneumoniae), this protein is Elongation factor G (fusA).